The sequence spans 194 residues: RNA polymerase II subunit A C-terminal domain phosphatase SSU72 like protein 4 (194 aa).

This sequence belongs to the SSU72 phosphatase family.

The protein localises to the nucleus. It catalyses the reaction O-phospho-L-seryl-[protein] + H2O = L-seryl-[protein] + phosphate. It carries out the reaction O-phospho-L-threonyl-[protein] + H2O = L-threonyl-[protein] + phosphate. Functionally, protein phosphatase that catalyzes the dephosphorylation of the C-terminal domain of RNA polymerase II. Plays a role in RNA processing and termination. The protein is RNA polymerase II subunit A C-terminal domain phosphatase SSU72 like protein 4 of Homo sapiens (Human).